We begin with the raw amino-acid sequence, 117 residues long: Thioredoxin (117 aa).

One can recognise a Thioredoxin domain in the interval 2-116 (AISLTEEDFV…FENIIKDFFG (115 aa)). Cys-40 and Cys-43 are joined by a disulfide.

Belongs to the thioredoxin family.

In terms of biological role, participates in various redox reactions through the reversible oxidation of its active center dithiol to a disulfide and catalyzes dithiol-disulfide exchange reactions. This is Thioredoxin (trxA) from Borreliella burgdorferi (strain ATCC 35210 / DSM 4680 / CIP 102532 / B31) (Borrelia burgdorferi).